Reading from the N-terminus, the 97-residue chain is Na(+)/H(+) antiporter subunit F1 (97 aa).

3 consecutive transmembrane segments (helical) span residues 3–23, 35–55, and 60–80; these read FKIF…AMLI, VVAL…FSIL, and YMLV…AVFS.

This sequence belongs to the CPA3 antiporters (TC 2.A.63) subunit F family. In terms of assembly, may form a heterooligomeric complex that consists of seven subunits: mnhA1, mnhB1, mnhC1, mnhD1, mnhE1, mnhF1 and mnhG1.

The protein resides in the cell membrane. Mnh complex is a Na(+)/H(+) antiporter involved in Na(+) excretion. This Staphylococcus epidermidis (strain ATCC 35984 / DSM 28319 / BCRC 17069 / CCUG 31568 / BM 3577 / RP62A) protein is Na(+)/H(+) antiporter subunit F1 (mnhF1).